The following is a 283-amino-acid chain: RNase adapter protein RapZ (283 aa).

Residue 8-15 coordinates ATP; it reads GRSGSGKS. A GTP-binding site is contributed by 56-59; sequence DVRN. The RNA-binding stretch occupies residues 266–283; it reads RSRGKNVQSRHRTLEKRK.

The protein belongs to the RapZ-like family. RapZ subfamily. Homotrimer.

In terms of biological role, modulates the synthesis of GlmS, by affecting the processing and stability of the regulatory small RNA GlmZ. When glucosamine-6-phosphate (GlcN6P) concentrations are high in the cell, RapZ binds GlmZ and targets it to cleavage by RNase E. Consequently, GlmZ is inactivated and unable to activate GlmS synthesis. Under low GlcN6P concentrations, RapZ is sequestered and inactivated by an other regulatory small RNA, GlmY, preventing GlmZ degradation and leading to synthesis of GlmS. In Photorhabdus laumondii subsp. laumondii (strain DSM 15139 / CIP 105565 / TT01) (Photorhabdus luminescens subsp. laumondii), this protein is RNase adapter protein RapZ.